We begin with the raw amino-acid sequence, 294 residues long: Polyketide transferase grgF (294 aa).

Active-site residues include cysteine 115, aspartate 240, and histidine 269.

It belongs to the polyketide transferase af380 family. Homodimer.

Its pathway is secondary metabolite biosynthesis. Polyketide transferase; part of the gene cluster that mediates the biosynthesis of gregatin A, a fungal polyketide featuring an alkylated furanone core. The PKS grgA synthesizes C11 and C4 polyketide chains in the presence and absence of the trans-enoyl reductase grgB, respectively. The polyketide transferase grgF is then responsible for the fusion of the two carbon chains to produce the furanone skeleton of gregatin A. GrgF first undergoes a conformational change to an open form, and the active site Cys-115 is acylated by the C11 chain. After the elimination of the phosphopantetheinyl chain, the second polyketide chain of four carbons long is delivered adjacent to the enzyme-bound C11 chain. The catalytic histidine, His-269, deprotonates a proton from C-2 of the long chain, and the resultant carbanion attacks the C-1 carbonyl of the crotonyl group to perform Claisen condensation, by which the phosphopantetheinyl chain is released. Eventually, hydrolysis of the thioester linkage probably by a His-269-activated water molecule completes the reaction to afford the grgF final product. Next, the cytochrome P450 monooxygenase grgG accepts the unstable grgF final product as substrate and performs the oxidative cyclization to furnish the gregatin scaffold and leads to the formation of desmethylgregatin A. Finally, the O-methyltransferase grgD methylates the carboxyl group of desmethylgregatin A to provide gregatin A. The sequence is that of Polyketide transferase grgF from Penicillium sp.